The sequence spans 413 residues: Putative competence-damage inducible protein (413 aa).

Belongs to the CinA family.

In Lacticaseibacillus casei (strain BL23) (Lactobacillus casei), this protein is Putative competence-damage inducible protein.